The primary structure comprises 144 residues: Flagellar assembly factor FliW (144 aa).

This sequence belongs to the FliW family. As to quaternary structure, interacts with translational regulator CsrA and flagellin(s).

It localises to the cytoplasm. Functionally, acts as an anti-CsrA protein, binds CsrA and prevents it from repressing translation of its target genes, one of which is flagellin. Binds to flagellin and participates in the assembly of the flagellum. The protein is Flagellar assembly factor FliW of Geobacillus sp. (strain WCH70).